We begin with the raw amino-acid sequence, 468 residues long: Lactate utilization protein B (468 aa).

2 consecutive 4Fe-4S ferredoxin-type domains span residues 303–333 (GTQFQSVLQCIRCAACINVCPVYRHIGGHAY) and 352–381 (YENYKELPYASSLCGACTEACPVKIPLHEL). The [4Fe-4S] cluster site is built by C312, C315, C318, C322, C365, C368, and C372. The tract at residues 442–468 (PAWTDSKDLPQPNKQTVRDWFKKRGNA) is disordered. Residues 457–468 (TVRDWFKKRGNA) are compositionally biased toward basic and acidic residues.

It belongs to the LutB/YkgF family.

Its function is as follows. Is involved in L-lactate degradation and allows cells to grow with lactate as the sole carbon source. Has probably a role as an electron transporter during oxidation of L-lactate. In Exiguobacterium sp. (strain ATCC BAA-1283 / AT1b), this protein is Lactate utilization protein B.